A 231-amino-acid polypeptide reads, in one-letter code: Phosphatidylserine decarboxylase proenzyme (231 aa).

The active-site Schiff-base intermediate with substrate; via pyruvic acid is serine 188. Serine 188 is modified (pyruvic acid (Ser); by autocatalysis).

Belongs to the phosphatidylserine decarboxylase family. PSD-A subfamily. Heterodimer of a large membrane-associated beta subunit and a small pyruvoyl-containing alpha subunit. It depends on pyruvate as a cofactor. In terms of processing, is synthesized initially as an inactive proenzyme. Formation of the active enzyme involves a self-maturation process in which the active site pyruvoyl group is generated from an internal serine residue via an autocatalytic post-translational modification. Two non-identical subunits are generated from the proenzyme in this reaction, and the pyruvate is formed at the N-terminus of the alpha chain, which is derived from the carboxyl end of the proenzyme. The post-translation cleavage follows an unusual pathway, termed non-hydrolytic serinolysis, in which the side chain hydroxyl group of the serine supplies its oxygen atom to form the C-terminus of the beta chain, while the remainder of the serine residue undergoes an oxidative deamination to produce ammonia and the pyruvoyl prosthetic group on the alpha chain.

It is found in the cell membrane. The enzyme catalyses a 1,2-diacyl-sn-glycero-3-phospho-L-serine + H(+) = a 1,2-diacyl-sn-glycero-3-phosphoethanolamine + CO2. Its pathway is phospholipid metabolism; phosphatidylethanolamine biosynthesis; phosphatidylethanolamine from CDP-diacylglycerol: step 2/2. Functionally, catalyzes the formation of phosphatidylethanolamine (PtdEtn) from phosphatidylserine (PtdSer). This Rickettsia rickettsii (strain Iowa) protein is Phosphatidylserine decarboxylase proenzyme.